Reading from the N-terminus, the 313-residue chain is MAEPIELLCWGGDWDLPSVQTDSLTVLAYAKFAGAELTVKFVDWTWRTITASVPQIHYEGTTVTEPTQILNFLRKQRFNADFELTAKQGADTMAYIALLEEKLRPALLHTFWVDAENYANLTRPWFTSHSPFPLNFFVPGRQASLALSRILLTKAESPLLNITEVEGKIYSEAKECLNLLSHRLGNFNFFFGDTPTSLDAFVFGHIAPLIKAPLPSGQLQKHLNQLDNLCQFCNTILKNYFTDATAEKRMDCSPTVAHDPVDANLQKLTQLVNKESNLIEKMDDNLRSSPQHRPHRHEAKPSAPASDRNSTPA.

Residues 280 to 313 (EKMDDNLRSSPQHRPHRHEAKPSAPASDRNSTPA) are disordered.

Belongs to the metaxin family. As to quaternary structure, part of a large protein complex spanning both mitochondrial membranes termed the mitochondrial intermembrane space bridging (MIB) complex.

Its subcellular location is the mitochondrion. It localises to the mitochondrion outer membrane. Functionally, could function in transport of proteins into the mitochondrion. This Danio rerio (Zebrafish) protein is Metaxin-3 (mtx3).